The primary structure comprises 266 residues: Glucosamine-6-phosphate deaminase 1 (266 aa).

The active-site Proton acceptor; for enolization step is the aspartate 67. The For ring-opening step role is filled by asparagine 136. The Proton acceptor; for ring-opening step role is filled by histidine 138. The active-site For ring-opening step is the glutamate 143.

The protein belongs to the glucosamine/galactosamine-6-phosphate isomerase family. In terms of assembly, homohexamer.

It localises to the cytoplasm. It carries out the reaction alpha-D-glucosamine 6-phosphate + H2O = beta-D-fructose 6-phosphate + NH4(+). Functionally, catalyzes the reversible conversion of alpha-D-glucosamine 6-phosphate (GlcN-6P) into beta-D-fructose 6-phosphate (Fru-6P) and ammonium ion, a regulatory reaction step in de novo uridine diphosphate-N-acetyl-alpha-D-glucosamine (UDP-GlcNAc) biosynthesis via hexosamine pathway. This Giardia intestinalis (Giardia lamblia) protein is Glucosamine-6-phosphate deaminase 1 (GPI1).